The primary structure comprises 155 residues: Transcriptional repressor NrdR (155 aa).

Residues 1–11 (MECPNCHQNAS) are compositionally biased toward polar residues. The tract at residues 1-22 (MECPNCHQNASRVIDSRPSDEN) is disordered. Residues 3-34 (CPNCHQNASRVIDSRPSDENRAIRRRRECENC) fold into a zinc finger. In terms of domain architecture, ATP-cone spans 49-139 (LLVVKNDGTR…IYREFKDMSS (91 aa)).

Belongs to the NrdR family. Requires Zn(2+) as cofactor.

In terms of biological role, negatively regulates transcription of bacterial ribonucleotide reductase nrd genes and operons by binding to NrdR-boxes. This Lactobacillus acidophilus (strain ATCC 700396 / NCK56 / N2 / NCFM) protein is Transcriptional repressor NrdR.